A 918-amino-acid polypeptide reads, in one-letter code: Interleukin-6 receptor subunit beta (918 aa).

The first 22 residues, 1-22 (MLTLQTWLVQALFIFLTTESTG), serve as a signal peptide directing secretion. Over 23–619 (ELLDPCGYIS…TPKFAQGEIE (597 aa)) the chain is Extracellular. An Ig-like C2-type domain is found at 26-120 (DPCGYISPES…LEQNVYGITI (95 aa)). 2 disulfides stabilise this stretch: Cys-28–Cys-54 and Cys-48–Cys-103. N-linked (GlcNAc...) asparagine glycosylation is found at Asn-43, Asn-83, and Asn-131. 5 Fibronectin type-III domains span residues 125–216 (PPEK…NFDP), 224–324 (PPHN…TYED), 329–424 (APSF…FQAT), 426–517 (PVMD…LKQA), and 518–613 (PPSK…TPKF). Cys-134 and Cys-144 are disulfide-bonded. A glycan (N-linked (GlcNAc...) asparagine) is linked at Asn-157. An intrachain disulfide couples Cys-172 to Cys-182. Asn-227 carries an N-linked (GlcNAc...) asparagine glycan. Positions 310–314 (WSDWS) match the WSXWS motif motif. N-linked (GlcNAc...) asparagine glycosylation is found at Asn-379 and Asn-383. An N-linked (GlcNAc...) (complex) asparagine glycan is attached at Asn-390. Cys-458 and Cys-466 are disulfide-bonded. Residues Asn-553 and Asn-564 are each glycosylated (N-linked (GlcNAc...) asparagine). A helical membrane pass occupies residues 620 to 641 (AIVVPVCLAFLLTTLLGVLFCF). Over 642 to 918 (NKRDLIKKHI…TVRQGGYMPQ (277 aa)) the chain is Cytoplasmic. Positions 651–659 (IWPNVPDPS) match the Box 1 motif motif. Disordered stretches follow at residues 660-681 (KSHI…SKDQ) and 722-758 (EGHS…STVQ). Ser-661 and Ser-667 each carry phosphoserine. The segment covering 731–755 (SSCMSSSRPSISSSDENESSQNTSS) has biased composition (low complexity). 4 positions are modified to phosphoserine: Ser-782, Ser-789, Ser-829, and Ser-839.

The protein belongs to the type I cytokine receptor family. Type 2 subfamily. In terms of assembly, component of a hexamer of two molecules each of IL6, IL6R and IL6ST; associates with the complex IL6:IL6R but does not interact with IL6. Forms heterodimers composed of LIFR and IL6ST (type I OSM receptor) which are activated by LIF and OSM. Also forms heterodimers composed of OSMR and IL6ST (type II receptor) which are activated by OSM but not by LIF. Component of a receptor complex composed of IL6ST/GP130, IL27RA/WSX1 and CNTFR which interacts with the neuroprotective peptide humanin. Interacts with HCK. Interacts with INPP5D/SHIP1. Interacts with SRC and YES. Interacts with ARMH4; this interaction prevents IL6ST protein homodimerization and bridges ARMH4 with IL6R and STAT3 and therefore inhibits phosphorylation of STAT3 at 'Tyr-705'. (Microbial infection) The homodimer binds two molecules of herpes virus 8/HHV-8 protein vIL-6. Phosphorylation of Ser-782 down-regulates cell surface expression. Post-translationally, heavily N-glycosylated. Glycosylation is required for protein stability and localization in plasma membrane but not for ligand binding. Found in all the tissues and cell lines examined. Expression not restricted to IL6 responsive cells. In terms of tissue distribution, expressed in blood serum (at protein level).

The protein localises to the cell membrane. Its subcellular location is the secreted. Functionally, signal-transducing molecule. The receptor systems for IL6, LIF, OSM, CNTF, IL11, CTF1 and BSF3 can utilize IL6ST for initiating signal transmission. Binding of IL6 to IL6R induces IL6ST homodimerization and formation of a high-affinity receptor complex, which activates the intracellular JAK-MAPK and JAK-STAT3 signaling pathways. That causes phosphorylation of IL6ST tyrosine residues which in turn activates STAT3. In parallel, the IL6 signaling pathway induces the expression of two cytokine receptor signaling inhibitors, SOCS1 and SOCS3, which inhibit JAK and terminate the activity of the IL6 signaling pathway as a negative feedback loop. Also activates the yes-associated protein 1 (YAP) and NOTCH pathways to control inflammation-induced epithelial regeneration, independently of STAT3. Acts as a receptor for the neuroprotective peptide humanin as part of a complex with IL27RA/WSX1 and CNTFR. Mediates signals which regulate immune response, hematopoiesis, pain control and bone metabolism. Has a role in embryonic development. Essential for survival of motor and sensory neurons and for differentiation of astrocytes. Required for expression of TRPA1 in nociceptive neurons. Required for the maintenance of PTH1R expression in the osteoblast lineage and for the stimulation of PTH-induced osteoblast differentiation. Required for normal trabecular bone mass and cortical bone composition. In terms of biological role, binds to the soluble IL6:sIL6R complex (hyper-IL6), thereby blocking IL6 trans-signaling. Inhibits sIL6R-dependent acute phase response. Also blocks IL11 cluster signaling through IL11R. The chain is Interleukin-6 receptor subunit beta from Homo sapiens (Human).